The primary structure comprises 232 residues: Phosphatidylserine decarboxylase proenzyme (232 aa).

Ser-190 acts as the Schiff-base intermediate with substrate; via pyruvic acid in catalysis. A Pyruvic acid (Ser); by autocatalysis modification is found at Ser-190.

Belongs to the phosphatidylserine decarboxylase family. PSD-A subfamily. As to quaternary structure, heterodimer of a large membrane-associated beta subunit and a small pyruvoyl-containing alpha subunit. The cofactor is pyruvate. In terms of processing, is synthesized initially as an inactive proenzyme. Formation of the active enzyme involves a self-maturation process in which the active site pyruvoyl group is generated from an internal serine residue via an autocatalytic post-translational modification. Two non-identical subunits are generated from the proenzyme in this reaction, and the pyruvate is formed at the N-terminus of the alpha chain, which is derived from the carboxyl end of the proenzyme. The post-translation cleavage follows an unusual pathway, termed non-hydrolytic serinolysis, in which the side chain hydroxyl group of the serine supplies its oxygen atom to form the C-terminus of the beta chain, while the remainder of the serine residue undergoes an oxidative deamination to produce ammonia and the pyruvoyl prosthetic group on the alpha chain.

It localises to the cell membrane. It carries out the reaction a 1,2-diacyl-sn-glycero-3-phospho-L-serine + H(+) = a 1,2-diacyl-sn-glycero-3-phosphoethanolamine + CO2. It participates in phospholipid metabolism; phosphatidylethanolamine biosynthesis; phosphatidylethanolamine from CDP-diacylglycerol: step 2/2. Catalyzes the formation of phosphatidylethanolamine (PtdEtn) from phosphatidylserine (PtdSer). The protein is Phosphatidylserine decarboxylase proenzyme of Rhizobium rhizogenes (strain K84 / ATCC BAA-868) (Agrobacterium radiobacter).